The chain runs to 115 residues: U3-lycotoxin-Ls1k (115 aa).

An N-terminal signal peptide occupies residues 1–20; sequence MKFVLLFGVLLVTLFSYSSA. Positions 21–44 are excised as a propeptide; sequence EMFDDFDQADEDELLSLIEKEEAR. 4 disulfides stabilise this stretch: C48-C63, C55-C72, C62-C87, and C74-C85.

It belongs to the neurotoxin 19 (CSTX) family. 01 subfamily. As to expression, expressed by the venom gland.

Its subcellular location is the secreted. This chain is U3-lycotoxin-Ls1k, found in Lycosa singoriensis (Wolf spider).